The sequence spans 37 residues: Cytochrome b6-f complex subunit 5 (37 aa).

The helical transmembrane segment at 5 to 25 threads the bilayer; it reads LLSGIVLGLMPVTLAGLFTTA.

It belongs to the PetG family. In terms of assembly, the 4 large subunits of the cytochrome b6-f complex are cytochrome b6, subunit IV (17 kDa polypeptide, PetD), cytochrome f and the Rieske protein, while the 4 small subunits are PetG, PetL, PetM and PetN. The complex functions as a dimer.

The protein localises to the plastid. Its subcellular location is the chloroplast thylakoid membrane. In terms of biological role, component of the cytochrome b6-f complex, which mediates electron transfer between photosystem II (PSII) and photosystem I (PSI), cyclic electron flow around PSI, and state transitions. PetG is required for either the stability or assembly of the cytochrome b6-f complex. This Ostreococcus tauri protein is Cytochrome b6-f complex subunit 5.